The sequence spans 593 residues: Chromodomain Y-like protein (593 aa).

The span at 1–14 (MGIGNSQPNSQEAQ) shows a compositional bias: polar residues. Residues 1 to 30 (MGIGNSQPNSQEAQLCTLPEKAEQPTDDNT) are disordered. A Chromo domain is found at 56 to 116 (TQVESIVDKR…RHNERQKEGS (61 aa)). An interaction with EZH2 region spans residues 56–304 (TQVESIVDKR…TIQTSVTGVT (249 aa)). At Ser83 the chain carries Phosphoserine. The segment at 110–158 (ERQKEGSLARASRASPSNARKQISRSTHSTLSKTNSKALVVGKDHESKS) is disordered. The span at 117-129 (LARASRASPSNAR) shows a compositional bias: low complexity. Lys130 carries the N6,N6,N6-trimethyllysine; by EHMT2; alternate modification. N6,N6-dimethyllysine; by EHMT2; alternate is present on Lys130. Lys130 is modified (N6-methyllysine; by EHMT2; alternate). Residues 133-146 (SRSTHSTLSKTNSK) are compositionally biased toward polar residues. Phosphoserine is present on residues Ser165, Ser196, and Ser211. Residues 200 to 223 (GRTSVDGFQGESPEKLDPVDQGAE) form a disordered region. The interval 357 to 589 (SENNSLNPEV…DSMLKYLQRK (233 aa)) is acetyl-CoA-binding domain.

In terms of assembly, forms multimers and multimerization is required for stable binding to chromatin. Interacts with HDAC1 and HDAC2 via its C-terminal acetyl-CoA-binding domain. Interacts with EZH2, EED, SUZ12, REST, EHMT1 and EHMT2. Part of a complex containing at least CDYL, REST, WIZ, SETB1, EHMT1 and EHMT2. Part of a complex containing at least CDYL, MIER1, MIER2, HDAC1 and HDAC2. Interacts with CHAF1A and CHAF1B; bridging the CAF-1 complex to the MCM2-7 (MCM) complex. Interacts with MCM3 and MCM5; bridging the CAF-1 complex to the MCM2-7 (MCM) complex. Interacts with EHMT2 and PRDM9; interaction only takes place when PRDM9 is bound to hotspot DNA. As to expression, highly expressed in testis (at protein level). Expressed in the hippocampus (at protein level). Expressed in the medial prefrontal cortex, prelimbic cortex, intralimbic cortex and cingulate cortex area (at protein level). Isoform 1: Expressed as 2 transcripts encoding the same protein, a ubiquitous transcript and a highly expressed testis-specific transcript.

The protein localises to the nucleus. It localises to the chromosome. It carries out the reaction L-lysyl-[protein] + acetyl-CoA = N(6)-acetyl-L-lysyl-[protein] + CoA + H(+). It catalyses the reaction 3-hydroxybutanoyl-CoA = (2E)-butenoyl-CoA + H2O. Chromatin reader protein that recognizes and binds histone H3 trimethylated at 'Lys-9', dimethylated at 'Lys-27' and trimethylated at 'Lys-27' (H3K9me3, H3K27me2 and H3K27me3, respectively). Part of multimeric repressive chromatin complexes, where it is required for transmission and restoration of repressive histone marks, thereby preserving the epigenetic landscape. Required for chromatin targeting and maximal enzymatic activity of Polycomb repressive complex 2 (PRC2); acts as a positive regulator of PRC2 activity by bridging the pre-existing histone H3K27me3 and newly recruited PRC2 on neighboring nucleosomes. Acts as a corepressor for REST by facilitating histone-lysine N-methyltransferase EHMT2 recruitment and H3K9 dimethylation at REST target genes for repression. Involved in X chromosome inactivation in females: recruited to Xist RNA-coated X chromosome and facilitates propagation of H3K9me2 by anchoring EHMT2. Promotes EZH2 accumulation and H3K27me3 methylation at DNA double strand breaks (DSBs), thereby facilitating transcriptional repression at sites of DNA damage and homology-directed repair of DSBs. Required for neuronal migration during brain development by repressing expression of RHOA. By repressing the expression of SCN8A, contributes to the inhibition of intrinsic neuronal excitability and epileptogenesis. In addition to acting as a chromatin reader, acts as a hydro-lyase. Shows crotonyl-coA hydratase activity by mediating the conversion of crotonyl-CoA ((2E)-butenoyl-CoA) to beta-hydroxybutyryl-CoA (3-hydroxybutanoyl-CoA), thereby acting as a negative regulator of histone crotonylation. Histone crotonylation is required during spermatogenesis; down-regulation of histone crotonylation by CDYL regulates the reactivation of sex chromosome-linked genes in round spermatids and histone replacement in elongating spermatids. By regulating histone crotonylation and trimethylation of H3K27, may be involved in stress-induced depression-like behaviors, possibly by regulating VGF expression. May have histone acetyltransferase activity; such activity is however unsure in vivo. In terms of biological role, not able to recognize and bind histone H3K9me3, histone H3K27me2 and histone H3K27me3, due to the presence of a N-terminal extension that inactivates the chromo domain. The polypeptide is Chromodomain Y-like protein (Mus musculus (Mouse)).